A 240-amino-acid polypeptide reads, in one-letter code: Uridylate kinase (240 aa).

13–16 (KLSG) contributes to the ATP binding site. The interval 21–26 (GDKGFG) is involved in allosteric activation by GTP. Gly-55 serves as a coordination point for UMP. Positions 56 and 60 each coordinate ATP. UMP is bound by residues Asp-75 and 136–143 (IGNPYFST). Positions 164, 170, and 173 each coordinate ATP.

The protein belongs to the UMP kinase family. Homohexamer.

The protein localises to the cytoplasm. It catalyses the reaction UMP + ATP = UDP + ADP. The protein operates within pyrimidine metabolism; CTP biosynthesis via de novo pathway; UDP from UMP (UMPK route): step 1/1. With respect to regulation, allosterically activated by GTP. Inhibited by UTP. Functionally, catalyzes the reversible phosphorylation of UMP to UDP. The protein is Uridylate kinase of Staphylococcus epidermidis (strain ATCC 35984 / DSM 28319 / BCRC 17069 / CCUG 31568 / BM 3577 / RP62A).